The chain runs to 583 residues: PTS system lactose-specific EIICB component (583 aa).

In terms of domain architecture, PTS EIIC type-3 spans 8 to 409 (IEKGKPFFEK…VVDVMIYYPF (402 aa)). The next 9 helical transmembrane spans lie at 30-50 (GFIAAIPIILFSSIFILITYV), 64-84 (GILMKPYNYTMGIVGLIVAGT), 103-123 (INFISTMMAAMSGFLFLAADP), 137-157 (KGLLTAFISAFITVIVYNFFI), 176-196 (VFKDIFPLSAVIIIIYALDLL), 222-242 (GWIGVTLIFGAFAFFWFVGIH), 283-303 (FVATMGGTGATLVVPFMFMWL), 339-359 (VFFIPFIFAPIVNVWIFKFFV), and 381-401 (IVMGTGFAFWSFVLAIVLIVV). Over residues 453–462 (ANETTTTESA) the composition is skewed to low complexity. The disordered stretch occupies residues 453–475 (ANETTTTESAPSDEEVSAKNSSN). Residues 480–583 (QTNVLVLCAG…LDFVQQQFEK (104 aa)) form the PTS EIIB type-3 domain. Residue Cys-487 is the Phosphocysteine intermediate; for EIIB activity of the active site. Cys-487 is modified (phosphocysteine; by EIIA).

The protein localises to the cell membrane. It carries out the reaction lactose(out) + N(pros)-phospho-L-histidyl-[protein] = lactose 6-phosphate(in) + L-histidyl-[protein]. In terms of biological role, the phosphoenolpyruvate-dependent sugar phosphotransferase system (sugar PTS), a major carbohydrate active transport system, catalyzes the phosphorylation of incoming sugar substrates concomitantly with their translocation across the cell membrane. The enzyme II LacEF PTS system is involved in lactose transport. This is PTS system lactose-specific EIICB component from Staphylococcus haemolyticus (strain JCSC1435).